Reading from the N-terminus, the 644-residue chain is MTSQSSVISNSCVTMERLSHMMERKAWCSQESALSEEEEDTTRPLETVTFKDVAVDLTQEEWEQMKPAQRNLYRDVMLENYSNLVTVGCQVTKPDVIFKLEQEEEPWVMEEEMFGRHCPEVWEVDEQIKKQQETLVRKVTSISKKILIKEKVIECKKVAKIFPLSSDIVTSRQSFYDCDSLDKGLEHNLDLLRYEKGCVREKQSNEFGKPFYHCASYVVTPFKCNQCGQDFSHKFDLIRHERIHAGEKPYECKECGKAFSRKENLITHQKIHTGEKPYKCNECGKAFIQMSNLIRHHRIHTGEKPYACKDCWKAFSQKSNLIEHERIHTGEKPYECKECGKSFSQKQNLIEHEKIHTGEKPYACNECGRAFSRMSSVTLHMRSHTGEKPYKCNKCGKAFSQCSVFIIHMRSHTGEKPYVCSECGKAFSQSSSLTVHMRNHTAEKPYECKECGKAFSRKENLITHQKIHTGEKPYECSECGKAFIQMSNLIRHQRIHTGEKPYACTVCGKAFSQKSNLTEHEKIHTGEKPYHCNQCGKAFSQRQNLLEHEKIHTGEKPFKCNECGKAFSRISSLTLHVRSHTGEKPYECNKCGKAFSQCSLLIIHMRSHTGEKPFECNECGKAFSQRASLSIHKRGHTGERHQVY.

The KRAB domain occupies 48–119; the sequence is VTFKDVAVDL…EEEMFGRHCP (72 aa). 15 consecutive C2H2-type zinc fingers follow at residues 222–244, 250–272, 278–300, 306–328, 334–356, 362–384, 390–412, 418–440, 446–468, 474–496, 502–524, 530–552, 558–580, 586–608, and 614–636; these read FKCN…ERIH, YECK…QKIH, YKCN…HRIH, YACK…ERIH, YECK…EKIH, YACN…MRSH, YKCN…MRSH, YVCS…MRNH, YECS…QRIH, YACT…EKIH, YHCN…EKIH, FKCN…VRSH, YECN…MRSH, and FECN…KRGH.

The protein belongs to the krueppel C2H2-type zinc-finger protein family. In terms of assembly, interacts with TRIM28.

Its subcellular location is the nucleus. In terms of biological role, has transcriptional repression activity, partially through the recruitment of the corepressor TRIM28 but also has repression activity independently of this interaction. Essential during embryonic development, where it acts as a direct repressor of a placental-specific transcript of IGF2 in early development and regulates convergent extension movements required for axis elongation and tissue morphogenesis in all germ layers. Also important for normal morphogenesis of extraembryonic tissues including the yolk sac, extraembryonic mesoderm and placenta. May enhance proliferation or maintenance of neural stem cells. The chain is Zinc finger protein 568 (ZNF568) from Homo sapiens (Human).